The following is a 621-amino-acid chain: UvrABC system protein C (621 aa).

In terms of domain architecture, GIY-YIG spans 20–106 (TQSGIYQFFD…IKSLKPKYNI (87 aa)). In terms of domain architecture, UVR spans 212 to 247 (KALLKILESKMHTLSHNLQFEEAAIMRDRIQKITQM).

The protein belongs to the UvrC family. In terms of assembly, interacts with UvrB in an incision complex.

It is found in the cytoplasm. Functionally, the UvrABC repair system catalyzes the recognition and processing of DNA lesions. UvrC both incises the 5' and 3' sides of the lesion. The N-terminal half is responsible for the 3' incision and the C-terminal half is responsible for the 5' incision. The protein is UvrABC system protein C of Helicobacter hepaticus (strain ATCC 51449 / 3B1).